The following is a 448-amino-acid chain: MRILPEPRGSVPCLLLLVSVLLSATLSLARVVEVVGYAESKIKTPHAFSGLRVTIDCKVNKGHFVTKGSGNIDDKGKFGLNIPHDIVSDNGALKEECYAQLHSAAGTPCPAHDGLESTKIVFLSKSGDKHILGLKQNLKFSPEICVSKFFWPMPKLPPFKGFDHPFPLPPPLELPPFLKKPCPPKYSPPVEVPPPVPVYEPPPKKEIPPPVPVYDPPPKKEVPPPVPVYKPPPKVELPPPIPKKPCPPKPPKIEHPPPVPVYKPPPKIEKPPPVPVYKPPPKIEHPPPVPVHKLPKKPCPPKKVDPPPVPVHKPPTKKPCPPKKVDPPPVPVHKPPPKIVIPPPKIEHPPPVPVYKPPPKIEHPPIYIPPIVKKPCPPPVPIYKPPVVIPKKPCPPPVPVYKPPVVVIPKKPCPPLPQLPPLPKFPPLPPKYIHHPKFGKWPPLPPHP.

The N-terminal stretch at 1–29 (MRILPEPRGSVPCLLLLVSVLLSATLSLA) is a signal peptide. 46 repeat units span residues 152–156 (PMPKL), 157–161 (PPFKG), 165–169 (PFPLP), 170–174 (PPLEL), 175–179 (PPFLK), 183–187 (PPKYS), 188–193 (PPVEVP), 194–198 (PPVPV), 201–205 (PPPKK), 208–212 (PPPVP), 216–220 (PPPKK), 222–226 (VPPPV), 227–231 (PVYKP), 232–236 (PPKVE), 238–242 (PPPIP), 245–249 (PCPPK), 250–254 (PPKIE), 256–259 (PPPV), 260–264 (PVYKP), 265–270 (PPKIEK), 271–278 (PPPVPVYK), 279–284 (PPPKIE), 286–294 (PPPVPVHKL), 295–299 (PKKPC), 300–304 (PPKKV), 306–311 (PPPVPV), 314–320 (PPTKKPC), 321–327 (PPKKVDP), 328–334 (PPVPVHK), 335–341 (PPPKIVI), 342–348 (PPPKIEH), 349–356 (PPPVPVYK), 357–363 (PPPKIEH), 364–368 (PPIYI), 369–374 (PPIVKK), 378–384 (PPVPIYK), 385–389 (PPVVI), 390–394 (PKKPC), 395–402 (PPPVPVYK), 403–407 (PPVVV), 409–413 (PKKPC), 414–419 (PPLPQL), 420–424 (PPLPK), 425–429 (FPPLP), 430–434 (PKYIH), and 442–446 (PPLPP). The tract at residues 152–446 (PMPKLPPFKG…KFGKWPPLPP (295 aa)) is 46 X 5 AA approximate repeats. Positions 240–290 (PIPKKPCPPKPPKIEHPPPVPVYKPPPKIEKPPPVPVYKPPPKIEHPPPVP) are enriched in pro residues. Positions 240 to 345 (PIPKKPCPPK…PPKIVIPPPK (106 aa)) are disordered. 2 stretches are compositionally biased toward pro residues: residues 306 to 319 (PPPV…TKKP) and 327 to 345 (PPPV…PPPK).

This sequence belongs to the plant proline-rich protein superfamily. As to expression, mostly expressed in aerial organs, particularly in expanding leaves, stems, flowers, and siliques. Also present in stipules.

It localises to the secreted. Its subcellular location is the cell wall. The sequence is that of Proline-rich protein 4 (PRP4) from Arabidopsis thaliana (Mouse-ear cress).